The following is a 356-amino-acid chain: Inositol monophosphatase 3 (356 aa).

The helical transmembrane segment at 11–31 threads the bilayer; sequence LGIGVFCLLGLGVLYHVYSGF. Residues glutamate 127, aspartate 167, leucine 169, aspartate 170, and aspartate 293 each coordinate Mg(2+). Glutamate 127 is a binding site for substrate. Substrate is bound by residues 169 to 172 and aspartate 293; that span reads LDAT.

The protein belongs to the inositol monophosphatase superfamily. Mg(2+) is required as a cofactor.

Its subcellular location is the membrane. It carries out the reaction a myo-inositol phosphate + H2O = myo-inositol + phosphate. It functions in the pathway polyol metabolism; myo-inositol biosynthesis; myo-inositol from D-glucose 6-phosphate: step 2/2. This chain is Inositol monophosphatase 3 (bpnt2), found in Xenopus tropicalis (Western clawed frog).